The following is a 381-amino-acid chain: Protein RecA (381 aa).

79–86 (GPESSGKT) provides a ligand contact to ATP.

This sequence belongs to the RecA family.

It is found in the cytoplasm. Functionally, can catalyze the hydrolysis of ATP in the presence of single-stranded DNA, the ATP-dependent uptake of single-stranded DNA by duplex DNA, and the ATP-dependent hybridization of homologous single-stranded DNAs. It interacts with LexA causing its activation and leading to its autocatalytic cleavage. The polypeptide is Protein RecA (Streptococcus parasanguinis).